Here is a 273-residue protein sequence, read N- to C-terminus: Large ribosomal subunit protein uL2 (273 aa).

2 disordered regions span residues 28–53 and 221–273; these read KPFA…TTRH and RGTA…RRTK. Low complexity predominate over residues 39-48; it reads KSGGRNNNGR.

This sequence belongs to the universal ribosomal protein uL2 family. In terms of assembly, part of the 50S ribosomal subunit. Forms a bridge to the 30S subunit in the 70S ribosome.

One of the primary rRNA binding proteins. Required for association of the 30S and 50S subunits to form the 70S ribosome, for tRNA binding and peptide bond formation. It has been suggested to have peptidyltransferase activity; this is somewhat controversial. Makes several contacts with the 16S rRNA in the 70S ribosome. The chain is Large ribosomal subunit protein uL2 from Pectobacterium atrosepticum (strain SCRI 1043 / ATCC BAA-672) (Erwinia carotovora subsp. atroseptica).